The chain runs to 615 residues: Isocitrate dehydrogenase kinase/phosphatase (615 aa).

ATP contacts are provided by residues 325 to 331 (APGIKGM) and Lys346. Residue Asp381 is part of the active site.

This sequence belongs to the AceK family.

It localises to the cytoplasm. It catalyses the reaction L-seryl-[isocitrate dehydrogenase] + ATP = O-phospho-L-seryl-[isocitrate dehydrogenase] + ADP + H(+). Bifunctional enzyme which can phosphorylate or dephosphorylate isocitrate dehydrogenase (IDH) on a specific serine residue. This is a regulatory mechanism which enables bacteria to bypass the Krebs cycle via the glyoxylate shunt in response to the source of carbon. When bacteria are grown on glucose, IDH is fully active and unphosphorylated, but when grown on acetate or ethanol, the activity of IDH declines drastically concomitant with its phosphorylation. The sequence is that of Isocitrate dehydrogenase kinase/phosphatase from Albidiferax ferrireducens (strain ATCC BAA-621 / DSM 15236 / T118) (Rhodoferax ferrireducens).